The primary structure comprises 358 residues: Heme A synthase (358 aa).

8 helical membrane passes run 25 to 45 (LVRYWLYAVFAVLIAIVMVGG), 111 to 131 (LLARFVGFLVAVPLGFFWLTG), 141 to 161 (MLGLLALGGLQGAIGWWMVAS), 176 to 196 (IHLTTACVIITAVFYIARGLV), 210 to 230 (FAGWIVFAVLVQIYLGGLVAG), 269 to 289 (VQFVHRMFAYTVLLLAILHAV), 304 to 324 (TIVLVGLVFIQAMIGIATLLM), and 326 to 346 (APLHLGLTHQFFALVVLAFAV). H273 is a binding site for heme. H334 is a binding site for heme.

The protein belongs to the COX15/CtaA family. Type 2 subfamily. Interacts with CtaB. The cofactor is heme b.

Its subcellular location is the cell membrane. The catalysed reaction is Fe(II)-heme o + 2 A + H2O = Fe(II)-heme a + 2 AH2. The protein operates within porphyrin-containing compound metabolism; heme A biosynthesis; heme A from heme O: step 1/1. Functionally, catalyzes the conversion of heme O to heme A by two successive hydroxylations of the methyl group at C8. The first hydroxylation forms heme I, the second hydroxylation results in an unstable dihydroxymethyl group, which spontaneously dehydrates, resulting in the formyl group of heme A. In Brucella suis (strain ATCC 23445 / NCTC 10510), this protein is Heme A synthase.